The primary structure comprises 4080 residues: Hybrid PKS-NRPS synthetase poxE (4080 aa).

The Ketosynthase family 3 (KS3) domain occupies 8–442; it reads REPIAIVGSG…GTNAHAIIEA (435 aa). Active-site for beta-ketoacyl synthase activity residues include cysteine 181, histidine 320, and histidine 362. Positions 554-878 are malonyl-CoA:ACP transacylase (MAT) domain; sequence VFTGQGAQWA…QRGMNDVEAM (325 aa). Residues 944-1078 are N-terminal hotdog fold; the sequence is HPILGTRCPD…GRLVITYGPV (135 aa). Residues 944–1246 form the PKS/mFAS DH domain; the sequence is HPILGTRCPD…AVPLEATNAD (303 aa). A dehydratase (DH) domain region spans residues 945–1243; it reads PILGTRCPDG…GIHAVPLEAT (299 aa). Residue histidine 976 is the Proton acceptor; for dehydratase activity of the active site. Positions 1093–1246 are C-terminal hotdog fold; that stretch reads MVDVPSERFY…AVPLEATNAD (154 aa). Aspartate 1152 (proton donor; for dehydratase activity) is an active-site residue. The methyltransferase (MT) domain stretch occupies residues 1400–1585; that stretch reads HFSDYLASVV…GVDTFTSDAD (186 aa). Residues 2118-2292 are ketoreductase (KR)domain; that stretch reads TYWLVGLTGS…AGSVMNIGAI (175 aa). The interval 2399–2478 is peptidyl carrier protein; sequence TTDEIYEVIK…TIGEIIKFVL (80 aa). One can recognise a Carrier 1 domain in the interval 2405-2481; it reads EVIKECFIVK…EIIKFVLEKL (77 aa). Serine 2441 carries the O-(pantetheine 4'-phosphoryl)serine modification. Residues 2488–2569 are disordered; it reads SLGLSPPTGA…AASPSIHTEE (82 aa). Positions 2511-2525 are enriched in basic and acidic residues; the sequence is VVVERRNVPRLEKKI. Low complexity predominate over residues 2528–2545; sequence SAGSRTSSSVTGTSKSVS. Residues 2551 to 2565 show a composition bias toward polar residues; that stretch reads DTASSQTSEAASPSI. The tract at residues 2607 to 3036 is condensation; that stretch reads KEPLSFGQSR…DSKQPGGHVS (430 aa). The interval 3069–3478 is adenylation; it reads DMAKQYPQKL…DGRLRIEGRI (410 aa). One can recognise a Carrier 2 domain in the interval 3593–3673; that stretch reads AHLNEAQAQM…KMALLIKPQE (81 aa). Residues 3598–3670 form a thiolation region; it reads AQAQMVQLWE…TLEKMALLIK (73 aa). Serine 3633 is subject to O-(pantetheine 4'-phosphoryl)serine. The tract at residues 3740-3959 is reductase (RED) domain; it reads LTGATGFIGQ…DFVPVEQVVR (220 aa).

It in the C-terminal section; belongs to the NRP synthetase family.

The protein operates within secondary metabolite biosynthesis. Its function is as follows. Hybrid PKS-NRPS synthetase; part of the gene cluster that mediates the biosynthesis of oxaleimides, cytotoxic compounds containing an unusual disubstituted succinimide moiety. The first step of the pathway is provided by the HR-PKS poxF that serves in a new mode of collaborative biosynthesis with the PKS-NRPS poxE, by providing the olefin containing amino acid substrate via the synthesis of an ACP-bound dec-4-enoate. The cytochrome P450 monooxygenase poxM-catalyzed oxidation at the alpha-position creates the enzyme-bound 2-hydroxydec-4-enoyl-ACP thioester, which may be prone to spontaneous hydrolysis to yield 2-hydroxydec-4-enoic acid due to increased electrophilicity of the carbonyl. 2-hydroxydec-4-enoic acid can then be further oxidized by poxM to yield the alpha-ketoacid 2-oxodec-4-enoicacid, which is reductively aminated by the aminotransferase poxL to yield (S,E)-2-aminodec-4-enoic acid. The Hybrid PKS-NRPS synthetase poxE then performs condensation between the octaketide product of its PKS modules and the amino group of (S,E)-2-aminodec-4-enoic acid which is activated and incorporated by the adenylation domain. The resulting aminoacyl product can be cyclized by the Diels-Alderase PoxQ and reductively released by the reductive (R) domain of poxE to yield an aldehyde intermediate. The released aldehyde is then substrate for a Knoevenagel condensation by the hydrolyase poxO followed by an oxidation at the 5-position of the pyrrolidone ring. The presence of the olefin from the amino acid building block allows for migration of the substituted allyl group to occur. This allylic transposition reaction takes place in a conjugate addition, semipinacol-like fashion to yield a succinimide intermediate. Iterative two-electron oxidations of the C7 methyl of the succinimide intermediate to the carboxylic acid can be catalyzed by one of two remaining cytochrome P450 monooxygenasess poxC or poxD to yield oxaleimide A. Subsequent oxidation yields the maleimide scaffold oxaleimide I. Both oxaleimide A and oxaleimide I can undergo oxidative modifications in the decalin ring to yield the series of products oxaleimides B to H. The protein is Hybrid PKS-NRPS synthetase poxE of Penicillium oxalicum.